We begin with the raw amino-acid sequence, 208 residues long: NADH-ubiquinone oxidoreductase chain 4 (208 aa).

The next 6 membrane-spanning stretches (helical) occupy residues 23-43, 60-80, 93-113, 114-134, 147-167, and 188-208; these read VWINVTSYSFVINMIALVTLW, SLSSPLTMLTIWLLPLMLLAS, KMYISLLITLQVLLIMTFSAN, ELIMFYILFEATLIPTLIIIT, LYFLFYTLIGSIPLLIALISI, and PTWSSHILWLACIMAFMIKMP.

This sequence belongs to the complex I subunit 4 family. As to quaternary structure, core subunit of respiratory chain NADH dehydrogenase (Complex I) which is composed of 45 different subunits.

It localises to the mitochondrion inner membrane. It carries out the reaction a ubiquinone + NADH + 5 H(+)(in) = a ubiquinol + NAD(+) + 4 H(+)(out). Core subunit of the mitochondrial membrane respiratory chain NADH dehydrogenase (Complex I) which catalyzes electron transfer from NADH through the respiratory chain, using ubiquinone as an electron acceptor. Essential for the catalytic activity and assembly of complex I. The polypeptide is NADH-ubiquinone oxidoreductase chain 4 (MT-ND4) (Phodopus sungorus (Striped hairy-footed hamster)).